A 141-amino-acid chain; its full sequence is Small ribosomal subunit protein uS12 (141 aa).

The protein belongs to the universal ribosomal protein uS12 family. In terms of assembly, part of the 30S ribosomal subunit.

In terms of biological role, with S4 and S5 plays an important role in translational accuracy. Located at the interface of the 30S and 50S subunits. The polypeptide is Small ribosomal subunit protein uS12 (Methanobrevibacter smithii (strain ATCC 35061 / DSM 861 / OCM 144 / PS)).